A 1083-amino-acid polypeptide reads, in one-letter code: Rho GTPase-activating protein 39 (1083 aa).

N-acetylserine is present on Ser-2. WW domains follow at residues 25–58 and 63–97; these read NTRL…PPAG and RTSE…RPQG. The interval 110–154 is disordered; it reads KQNTESPRASAESSPGRGSSVSREGSTSSSLEPEPDTEKAQELPA. Low complexity predominate over residues 117 to 141; sequence RASAESSPGRGSSVSREGSTSSSLE. Phosphoserine is present on Ser-169. Positions 226–369 are disordered; that stretch reads AAQGNGYAPD…NKQGPPSPCQ (144 aa). A compositionally biased stretch (polar residues) spans 245-256; it reads PSGSQHSPSLQT. The segment covering 268-280 has biased composition (basic and acidic residues); sequence PERRPSPFLKRAE. Residues Ser-286, Ser-384, Ser-388, Ser-406, and Ser-407 each carry the phosphoserine modification. Disordered stretches follow at residues 405-545 and 570-599; these read GSSP…EAEG and MKQR…PGPV. Polar residues-rich tracts occupy residues 474-488 and 573-582; these read SWSS…TGYS and RSSWDSQQDG. Residues Ser-604, Ser-690, Ser-715, and Ser-726 each carry the phosphoserine modification. A MyTH4 domain is found at 722 to 879; sequence WSSESIKKPM…PNVEEIRHAK (158 aa). Positions 890–1078 constitute a Rho-GAP domain; the sequence is SALQEVMGMQ…VLIQHLDTSF (189 aa).

The protein resides in the nucleus. In Homo sapiens (Human), this protein is Rho GTPase-activating protein 39 (ARHGAP39).